Reading from the N-terminus, the 405-residue chain is Tryptophan synthase beta chain (405 aa).

At Lys98 the chain carries N6-(pyridoxal phosphate)lysine.

Belongs to the TrpB family. Tetramer of two alpha and two beta chains. Pyridoxal 5'-phosphate is required as a cofactor.

It carries out the reaction (1S,2R)-1-C-(indol-3-yl)glycerol 3-phosphate + L-serine = D-glyceraldehyde 3-phosphate + L-tryptophan + H2O. It functions in the pathway amino-acid biosynthesis; L-tryptophan biosynthesis; L-tryptophan from chorismate: step 5/5. Its function is as follows. The beta subunit is responsible for the synthesis of L-tryptophan from indole and L-serine. The polypeptide is Tryptophan synthase beta chain (Xanthomonas euvesicatoria pv. vesicatoria (strain 85-10) (Xanthomonas campestris pv. vesicatoria)).